We begin with the raw amino-acid sequence, 52 residues long: UPF0057 membrane protein PA0567 (52 aa).

The next 2 membrane-spanning stretches (helical) occupy residues isoleucine 6–alanine 26 and leucine 29–isoleucine 49.

This sequence belongs to the UPF0057 (PMP3) family.

It is found in the cell membrane. This is UPF0057 membrane protein PA0567 from Pseudomonas aeruginosa (strain ATCC 15692 / DSM 22644 / CIP 104116 / JCM 14847 / LMG 12228 / 1C / PRS 101 / PAO1).